A 636-amino-acid chain; its full sequence is Threonine--tRNA ligase (636 aa).

Residues 1–63 enclose the TGS domain; the sequence is MPMITITLPD…EHDASLRIIT (63 aa). Positions 245-536 are catalytic; the sequence is DHRKIGKAQD…LIEHHAGAFP (292 aa). Residues Cys336, His387, and His513 each contribute to the Zn(2+) site.

The protein belongs to the class-II aminoacyl-tRNA synthetase family. In terms of assembly, homodimer. It depends on Zn(2+) as a cofactor.

It localises to the cytoplasm. It catalyses the reaction tRNA(Thr) + L-threonine + ATP = L-threonyl-tRNA(Thr) + AMP + diphosphate + H(+). Its function is as follows. Catalyzes the attachment of threonine to tRNA(Thr) in a two-step reaction: L-threonine is first activated by ATP to form Thr-AMP and then transferred to the acceptor end of tRNA(Thr). Also edits incorrectly charged L-seryl-tRNA(Thr). The protein is Threonine--tRNA ligase of Xanthomonas campestris pv. campestris (strain 8004).